The sequence spans 142 residues: AP-2 complex subunit sigma (142 aa).

Belongs to the adaptor complexes small subunit family. In terms of assembly, adaptor protein complex 2 (AP-2) is a heterotetramer composed of two large adaptins (alpha-type and beta-type subunits), a medium adaptin (mu-type subunit AP50) and a small adaptin (sigma-type subunit AP17).

The protein resides in the cell membrane. It is found in the membrane. Its subcellular location is the coated pit. In terms of biological role, component of the adaptor complexes which link clathrin to receptors in coated vesicles. Clathrin-associated protein complexes are believed to interact with the cytoplasmic tails of membrane proteins, leading to their selection and concentration. This is AP-2 complex subunit sigma (ap2s1) from Dictyostelium discoideum (Social amoeba).